The following is a 160-amino-acid chain: Ribosome maturation factor RimP (160 aa).

The protein belongs to the RimP family.

The protein resides in the cytoplasm. Its function is as follows. Required for maturation of 30S ribosomal subunits. The chain is Ribosome maturation factor RimP from Cronobacter sakazakii (strain ATCC BAA-894) (Enterobacter sakazakii).